The following is a 712-amino-acid chain: Interleukin-1 receptor-associated kinase 1 (712 aa).

The Death domain occupies 27-106 (MCRFYKVMDA…DIITAWHPPA (80 aa)). Thr66 is modified (phosphothreonine; by PKC/PRKCI). The segment at 105–187 (PAPLPSPGTT…STKPGPESSV (83 aa)) is disordered. Residues 110-211 (SPGTTAPRPS…LCEISRGTHN (102 aa)) are proST region. A compositionally biased stretch (low complexity) spans 115 to 133 (APRPSSIPAPAEAEAWSPR). The residue at position 131 (Ser131) is a Phosphoserine. Lys134 is covalently cross-linked (Glycyl lysine isopeptide (Lys-Gly) (interchain with G-Cter in ubiquitin)). The span at 137–154 (SSASTFLSPAFPGSQTHS) shows a compositional bias: polar residues. Lys180 is covalently cross-linked (Glycyl lysine isopeptide (Lys-Gly) (interchain with G-Cter in ubiquitin)). Residue Thr209 is modified to Phosphothreonine; by IRAK4. Residues 212-521 (FSEELKIGEG…TQVYERLEKL (310 aa)) enclose the Protein kinase domain. Residues 218–226 (IGEGGFGCV) and Lys239 contribute to the ATP site. The active-site Proton acceptor is the Asp340. Residues 342–345 (KSSN) and Asp358 each bind ATP. 2 positions are modified to phosphoserine: Ser371 and Ser375. Thr387 is modified (phosphothreonine). Disordered stretches follow at residues 532 to 591 (SEAA…SDES), 613 to 660 (APLR…PPQI), and 690 to 712 (SSLPGLGLEQDRQGPEESDEFQS). Residues 543 to 553 (QENSYVSSTGR) show a composition bias toward polar residues. Ser556 is subject to Phosphoserine. 2 stretches are compositionally biased toward low complexity: residues 562–575 (QPLAAPSGASAQAA) and 643–658 (EGLALGSSASSSSEPP).

This sequence belongs to the protein kinase superfamily. TKL Ser/Thr protein kinase family. Pelle subfamily. As to quaternary structure, homodimer. Forms a complex with TRAF6, PELI1, IRAK4 and MYD88. Direct binding of SMAD6 to PELI1 prevents complex formation and hence negatively regulates IL1R-TLR signaling and eventually NF-kappa-B-mediated gene expression. The TRAF6-PELI1-IRAK4-MYD88 complex recruits MAP3K7/TAK1, TAB1 and TAB2 to mediate NF-kappa-B activation. Interaction with MYD88 recruits IRAK1 to the stimulated receptor complex. Interacts with TOLLIP; this interaction occurs in the cytosol prior to receptor activation. Interacts with IL1RL1. Interacts with PELI1 and TRAF6. Interacts (when polyubiquitinated) with IKBKG/NEMO. Interacts with RSAD2/viperin. Interacts with IRAK1BP1. Interacts with PELI2. Interacts with ZC3H12A; this interaction increases the interaction between ZC3H12A and IKBKB/IKKB. Interacts with IRAK4. Interacts with PELI3. Interacts with INAVA; the interaction takes place upon PRR stimulation. Interacts (via C-terminus) with NFATC4 (via N-terminus). In terms of assembly, (Microbial infection) Interacts with mumps virus protein SH; this interaction inhibits downstream NF-kappa-B pathway activation. (Microbial infection) Interacts with alphaviruses SINV, CHIKV, RRV, VEEV and EEEV capsid proteins; the interactions lead to inhibition of IRAK1-dependent signaling. Mg(2+) is required as a cofactor. Post-translationally, following recruitment on the activated receptor complex, phosphorylated on Thr-209, probably by IRAK4, resulting in a conformational change of the kinase domain, allowing further phosphorylations to take place. Thr-387 phosphorylation in the activation loop is required to achieve full enzymatic activity. In terms of processing, polyubiquitinated by TRAF6 after cell stimulation with IL-1-beta by PELI1, PELI2 and PELI3. Polyubiquitination occurs with polyubiquitin chains linked through 'Lys-63'. Ubiquitination promotes interaction with NEMO/IKBKG. Also sumoylated; leading to nuclear translocation. In terms of tissue distribution, isoform 1 and isoform 2 are ubiquitously expressed in all tissues examined, with isoform 1 being more strongly expressed than isoform 2.

It is found in the cytoplasm. The protein localises to the nucleus. It localises to the lipid droplet. It carries out the reaction L-seryl-[protein] + ATP = O-phospho-L-seryl-[protein] + ADP + H(+). The catalysed reaction is L-threonyl-[protein] + ATP = O-phospho-L-threonyl-[protein] + ADP + H(+). Functionally, serine/threonine-protein kinase that plays a critical role in initiating innate immune response against foreign pathogens. Involved in Toll-like receptor (TLR) and IL-1R signaling pathways. Is rapidly recruited by MYD88 to the receptor-signaling complex upon TLR activation. Association with MYD88 leads to IRAK1 phosphorylation by IRAK4 and subsequent autophosphorylation and kinase activation. Phosphorylates E3 ubiquitin ligases Pellino proteins (PELI1, PELI2 and PELI3) to promote pellino-mediated polyubiquitination of IRAK1. Then, the ubiquitin-binding domain of IKBKG/NEMO binds to polyubiquitinated IRAK1 bringing together the IRAK1-MAP3K7/TAK1-TRAF6 complex and the NEMO-IKKA-IKKB complex. In turn, MAP3K7/TAK1 activates IKKs (CHUK/IKKA and IKBKB/IKKB) leading to NF-kappa-B nuclear translocation and activation. Alternatively, phosphorylates TIRAP to promote its ubiquitination and subsequent degradation. Phosphorylates the interferon regulatory factor 7 (IRF7) to induce its activation and translocation to the nucleus, resulting in transcriptional activation of type I IFN genes, which drive the cell in an antiviral state. When sumoylated, translocates to the nucleus and phosphorylates STAT3. The polypeptide is Interleukin-1 receptor-associated kinase 1 (Homo sapiens (Human)).